The following is a 553-amino-acid chain: Arginine--tRNA ligase (553 aa).

The 'HIGH' region signature appears at 130 to 140 (ANPTGDLHIGH).

Belongs to the class-I aminoacyl-tRNA synthetase family. In terms of assembly, monomer.

It localises to the cytoplasm. It catalyses the reaction tRNA(Arg) + L-arginine + ATP = L-arginyl-tRNA(Arg) + AMP + diphosphate. The polypeptide is Arginine--tRNA ligase (Staphylococcus aureus (strain bovine RF122 / ET3-1)).